The chain runs to 167 residues: Peptide deformylase (167 aa).

Residues C91 and H133 each contribute to the Fe cation site. The active site involves E134. Position 137 (H137) interacts with Fe cation.

The protein belongs to the polypeptide deformylase family. It depends on Fe(2+) as a cofactor.

The enzyme catalyses N-terminal N-formyl-L-methionyl-[peptide] + H2O = N-terminal L-methionyl-[peptide] + formate. Removes the formyl group from the N-terminal Met of newly synthesized proteins. Requires at least a dipeptide for an efficient rate of reaction. N-terminal L-methionine is a prerequisite for activity but the enzyme has broad specificity at other positions. The protein is Peptide deformylase of Buchnera aphidicola subsp. Schizaphis graminum (strain Sg).